Here is a 267-residue protein sequence, read N- to C-terminus: 2-keto-3-deoxy-L-rhamnonate aldolase (267 aa).

Histidine 49 (proton acceptor) is an active-site residue. Position 151 (glutamine 151) interacts with substrate. A Mg(2+)-binding site is contributed by glutamate 153. Substrate-binding residues include alanine 178 and aspartate 179. Aspartate 179 provides a ligand contact to Mg(2+).

This sequence belongs to the HpcH/HpaI aldolase family. KDR aldolase subfamily. In terms of assembly, homohexamer. Mg(2+) is required as a cofactor.

It catalyses the reaction 2-dehydro-3-deoxy-L-rhamnonate = (S)-lactaldehyde + pyruvate. Its function is as follows. Catalyzes the reversible retro-aldol cleavage of 2-keto-3-deoxy-L-rhamnonate (KDR) to pyruvate and lactaldehyde. This chain is 2-keto-3-deoxy-L-rhamnonate aldolase, found in Klebsiella pneumoniae subsp. pneumoniae (strain ATCC 700721 / MGH 78578).